Reading from the N-terminus, the 52-residue chain is uncharacterized protein (52 aa).

Residues 21 to 40 form a helical membrane-spanning segment; it reads VAMNSYVELLFLSVPLIHIF.

It is found in the cell membrane. This is an uncharacterized protein from Bacillus subtilis (strain 168).